We begin with the raw amino-acid sequence, 181 residues long: Negative modulator of initiation of replication (181 aa).

Interaction with DNA stretches follow at residues 87 to 88 (AV), 116 to 120 (RTRVY), and 150 to 156 (NTNTGRK).

Belongs to the SeqA family. Homodimer. Polymerizes to form helical filaments.

Its subcellular location is the cytoplasm. Its function is as follows. Negative regulator of replication initiation, which contributes to regulation of DNA replication and ensures that replication initiation occurs exactly once per chromosome per cell cycle. Binds to pairs of hemimethylated GATC sequences in the oriC region, thus preventing assembly of replication proteins and re-initiation at newly replicated origins. Repression is relieved when the region becomes fully methylated. This is Negative modulator of initiation of replication from Shigella flexneri.